A 267-amino-acid polypeptide reads, in one-letter code: Phosphate import ATP-binding protein PstB (267 aa).

Positions 21-262 (IAIRNLEFYY…PSKQQTEDYI (242 aa)) constitute an ABC transporter domain. 53–60 (GPSGCGKS) contacts ATP.

The protein belongs to the ABC transporter superfamily. Phosphate importer (TC 3.A.1.7) family. As to quaternary structure, the complex is composed of two ATP-binding proteins (PstB), two transmembrane proteins (PstC and PstA) and a solute-binding protein (PstS).

Its subcellular location is the cell inner membrane. It catalyses the reaction phosphate(out) + ATP + H2O = ADP + 2 phosphate(in) + H(+). In terms of biological role, part of the ABC transporter complex PstSACB involved in phosphate import. Responsible for energy coupling to the transport system. This Xylella fastidiosa (strain 9a5c) protein is Phosphate import ATP-binding protein PstB.